Here is a 173-residue protein sequence, read N- to C-terminus: Peptide deformylase (173 aa).

Cys94 and His136 together coordinate Fe cation. Glu137 is a catalytic residue. His140 lines the Fe cation pocket.

Belongs to the polypeptide deformylase family. Requires Fe(2+) as cofactor.

It carries out the reaction N-terminal N-formyl-L-methionyl-[peptide] + H2O = N-terminal L-methionyl-[peptide] + formate. Removes the formyl group from the N-terminal Met of newly synthesized proteins. Requires at least a dipeptide for an efficient rate of reaction. N-terminal L-methionine is a prerequisite for activity but the enzyme has broad specificity at other positions. In Desulfosudis oleivorans (strain DSM 6200 / JCM 39069 / Hxd3) (Desulfococcus oleovorans), this protein is Peptide deformylase.